The sequence spans 350 residues: L-serine dehydratase (350 aa).

The residue at position 62 (Lys62) is an N6-(pyridoxal phosphate)lysine.

This sequence belongs to the serine/threonine dehydratase family. It depends on pyridoxal 5'-phosphate as a cofactor.

The protein localises to the cytoplasm. The catalysed reaction is L-serine = pyruvate + NH4(+). Its pathway is carbohydrate biosynthesis; gluconeogenesis. This Dictyostelium discoideum (Social amoeba) protein is L-serine dehydratase (sds).